The following is a 197-amino-acid chain: Nucleoside triphosphate pyrophosphatase (197 aa).

Asp71 acts as the Proton acceptor in catalysis.

Belongs to the Maf family. A divalent metal cation is required as a cofactor.

Its subcellular location is the cytoplasm. The enzyme catalyses a ribonucleoside 5'-triphosphate + H2O = a ribonucleoside 5'-phosphate + diphosphate + H(+). It carries out the reaction a 2'-deoxyribonucleoside 5'-triphosphate + H2O = a 2'-deoxyribonucleoside 5'-phosphate + diphosphate + H(+). Its function is as follows. Nucleoside triphosphate pyrophosphatase. May have a dual role in cell division arrest and in preventing the incorporation of modified nucleotides into cellular nucleic acids. This chain is Nucleoside triphosphate pyrophosphatase, found in Synechococcus sp. (strain JA-2-3B'a(2-13)) (Cyanobacteria bacterium Yellowstone B-Prime).